A 235-amino-acid polypeptide reads, in one-letter code: Small ribosomal subunit protein uS5 (235 aa).

Residues 60–123 (ENQEVLDIAL…NYAKMNIIEI (64 aa)) enclose the S5 DRBM domain. Residues C127, C132, C134, and H138 each coordinate Zn(2+).

The protein belongs to the universal ribosomal protein uS5 family. In terms of assembly, part of the 30S ribosomal subunit. Contacts protein S4. Zn(2+) is required as a cofactor.

In terms of biological role, with S4 and S12 plays an important role in translational accuracy. The sequence is that of Small ribosomal subunit protein uS5 from Thermococcus kodakarensis (strain ATCC BAA-918 / JCM 12380 / KOD1) (Pyrococcus kodakaraensis (strain KOD1)).